The primary structure comprises 644 residues: Major core protein OPG129 (644 aa).

Positions methionine 1–glycine 61 are excised as a propeptide. The disordered stretch occupies residues glycine 61–threonine 80.

It belongs to the orthopoxvirus OPG129 family. Post-translationally, the 73-kDa precursor is cleaved to a mature protein of 60 kDa during virion maturation. Proteolytic cleavage of major core proteins OPG129, OPG136, and OPG098, which occurs at a late stage of core formation, is required for production of infectious mature virions (MV).

The protein resides in the virion. Functionally, major component of the virion core that undergoes proteolytic processing during the immature virion (IV) to mature virion (MV) transition. Essential for the formation of a structurally normal core. The polypeptide is Major core protein OPG129 (OPG129) (Variola virus (isolate Human/India/Ind3/1967) (VARV)).